We begin with the raw amino-acid sequence, 341 residues long: Protein P3 (341 aa).

The disordered stretch occupies residues 46–175; the sequence is RARQAANPVS…QTKNAPDANE (130 aa). Residues 97–116 are compositionally biased toward basic residues; the sequence is KSKRAVRREKRRTAAKKATN. Positions 142-152 are enriched in low complexity; that stretch reads SYLSSLLSSPS.

Belongs to the nepovirus protein P3 family.

In Vitis rupestris (Grape), this protein is Protein P3.